We begin with the raw amino-acid sequence, 171 residues long: ATP synthase subunit b (171 aa).

A helical transmembrane segment spans residues 32–52 (FFAVLLIFLIVLGVIAKWVVP).

It belongs to the ATPase B chain family. F-type ATPases have 2 components, F(1) - the catalytic core - and F(0) - the membrane proton channel. F(1) has five subunits: alpha(3), beta(3), gamma(1), delta(1), epsilon(1). F(0) has three main subunits: a(1), b(2) and c(10-14). The alpha and beta chains form an alternating ring which encloses part of the gamma chain. F(1) is attached to F(0) by a central stalk formed by the gamma and epsilon chains, while a peripheral stalk is formed by the delta and b chains.

Its subcellular location is the cell membrane. F(1)F(0) ATP synthase produces ATP from ADP in the presence of a proton or sodium gradient. F-type ATPases consist of two structural domains, F(1) containing the extramembraneous catalytic core and F(0) containing the membrane proton channel, linked together by a central stalk and a peripheral stalk. During catalysis, ATP synthesis in the catalytic domain of F(1) is coupled via a rotary mechanism of the central stalk subunits to proton translocation. Functionally, component of the F(0) channel, it forms part of the peripheral stalk, linking F(1) to F(0). This chain is ATP synthase subunit b, found in Mycolicibacterium gilvum (strain PYR-GCK) (Mycobacterium gilvum (strain PYR-GCK)).